The chain runs to 129 residues: Ribosome-binding factor A (129 aa).

It belongs to the RbfA family. As to quaternary structure, monomer. Binds 30S ribosomal subunits, but not 50S ribosomal subunits or 70S ribosomes.

The protein localises to the cytoplasm. In terms of biological role, one of several proteins that assist in the late maturation steps of the functional core of the 30S ribosomal subunit. Associates with free 30S ribosomal subunits (but not with 30S subunits that are part of 70S ribosomes or polysomes). Required for efficient processing of 16S rRNA. May interact with the 5'-terminal helix region of 16S rRNA. The sequence is that of Ribosome-binding factor A from Desulfosudis oleivorans (strain DSM 6200 / JCM 39069 / Hxd3) (Desulfococcus oleovorans).